The following is a 1281-amino-acid chain: Angiotensin-converting enzyme (1281 aa).

The N-terminal stretch at 1–17 (MPAALGLLLPWLSLVGA) is a signal peptide. At 18–1241 (LQPGLEPPQS…MSVGTKQATA (1224 aa)) the chain is on the extracellular side. Peptidase M2 domains follow at residues 28–610 (DPTE…LGWP) and 629–1208 (IVDE…LGWP). Residues N42, N62, N80, N99, and N148 are each glycosylated (N-linked (GlcNAc...) asparagine). C145 and C151 are disulfide-bonded. Residue Y217 coordinates chloride. N304 is a glycosylation site (N-linked (GlcNAc...) asparagine). C345 and C363 form a disulfide bridge. A Zn(2+)-binding site is contributed by H376. E377 functions as the Proton acceptor 1 in the catalytic mechanism. Zn(2+) contacts are provided by H380 and E404. Residue N495 is glycosylated (N-linked (GlcNAc...) asparagine). H506 (proton donor 1) is an active-site residue. R515 contributes to the chloride binding site. A disulfide bond links C531 and C543. N-linked (GlcNAc...) asparagine glycosylation is found at N535, N573, N601, N643, N663, and N746. An intrachain disulfide couples C743 to C749. Positions 777 and 815 each coordinate chloride. An intrachain disulfide couples C943 to C961. Position 974 (H974) interacts with Zn(2+). Catalysis depends on E975, which acts as the Proton acceptor 2. H978 and E1002 together coordinate Zn(2+). Chloride-binding residues include W1076 and R1080. Residue H1104 is the Proton donor 2 of the active site. A chloride-binding site is contributed by R1113. An intrachain disulfide couples C1129 to C1141. N-linked (GlcNAc...) asparagine glycosylation occurs at N1177. The tract at residues 1201 to 1240 (NGEVLGWPEYSWTPYAVTEFHAATDTADFLGMSVGTKQAT) is juxtamembrane stalk. The helical transmembrane segment at 1242 to 1262 (GAWVLLALALVFLITSIFLGV) threads the bilayer. The Cytoplasmic portion of the chain corresponds to 1263-1281 (KLFSSRRKAFKSSSEMELK).

The protein belongs to the peptidase M2 family. Zn(2+) serves as cofactor. The cofactor is chloride.

The protein resides in the cell membrane. Its subcellular location is the cytoplasm. The catalysed reaction is Release of a C-terminal dipeptide, oligopeptide-|-Xaa-Yaa, when Xaa is not Pro, and Yaa is neither Asp nor Glu. Thus, conversion of angiotensin I to angiotensin II, with increase in vasoconstrictor activity, but no action on angiotensin II.. It catalyses the reaction angiotensin I + H2O = L-histidyl-L-leucine + angiotensin II. It carries out the reaction bradykinin + H2O = L-Phe-L-Arg + bradykinin(1-7). The enzyme catalyses substance P + H2O = substance P(1-9) + L-Leu-L-Met-NH2. The catalysed reaction is substance P + H2O = substance P(1-8) + Gly-L-Leu-L-Met-NH2. It catalyses the reaction substance P + H2O = L-Phe-L-Phe-Gly-L-Leu-L-Met-NH2 + substance P(1-6). It carries out the reaction neurotensin + H2O = neurotensin(1-11) + L-isoleucyl-L-leucine. The enzyme catalyses goralatide + H2O = N-acetyl-L-seryl-L-aspartate + L-lysyl-L-proline. The catalysed reaction is Met-enkephalin + H2O = L-phenylalanyl-L-methionine + L-tyrosylglycylglycine. It catalyses the reaction Leu-enkephalin + H2O = L-tyrosylglycylglycine + L-phenylalanyl-L-leucine. It carries out the reaction Met-enkephalin-Arg-Phe + H2O = L-arginyl-L-phenylalanine + Met-enkephalin. Its function is as follows. Dipeptidyl carboxypeptidase that removes dipeptides from the C-terminus of a variety of circulating hormones, such as angiotensin I, bradykinin or enkephalins, thereby playing a key role in the regulation of blood pressure, electrolyte homeostasis or synaptic plasticity. Composed of two similar catalytic domains, each possessing a functional active site, with different selectivity for substrates. Plays a major role in the angiotensin-renin system that regulates blood pressure and sodium retention by the kidney by converting angiotensin I to angiotensin II, resulting in an increase of the vasoconstrictor activity of angiotensin. Also able to inactivate bradykinin, a potent vasodilator, and therefore enhance the blood pressure response. Acts as a regulator of synaptic transmission by mediating cleavage of neuropeptide hormones, such as substance P, neurotensin or enkephalins. Catalyzes degradation of different enkephalin neuropeptides (Met-enkephalin, Leu-enkephalin, Met-enkephalin-Arg-Phe and possibly Met-enkephalin-Arg-Gly-Leu). Also acts as a regulator of hematopoietic stem cell differentiation by mediating degradation of hemoregulatory peptide N-acetyl-SDKP (AcSDKP). The polypeptide is Angiotensin-converting enzyme (Gallus gallus (Chicken)).